We begin with the raw amino-acid sequence, 62 residues long: Large ribosomal subunit protein bL28 (62 aa).

It belongs to the bacterial ribosomal protein bL28 family.

The protein is Large ribosomal subunit protein bL28 of Parafrankia sp. (strain EAN1pec).